The primary structure comprises 349 residues: MSGPELGRLIDEVDRTVDVQFAAAGDLDELNRLYASLLGRRGSLNALMKQLPGAAPEERKALGQRLNAVKGRVERAREEATARIKRAARDRELSAPPLDITLPGRWRAPGRPHPIMRTLDEIVDIFVGLGFDVAEGPQIELARYNFDLLGFPADHPAMDMHDTFYMAGDPGQNVLLRTHTSPVQVREMLSHPPPVMIVAPGVVYRRDDDASHSPMFVQIEGLVVDRDVSLADLKGLLEVYSRRMFGEATRTRFRPSYFPFTEPSAELDVSCLVCFGENRACPQCKGTGWLEVLGCGMVHPTVLRNVGIDPEEYTGLAFGIGVDRTANMKFAVDDIRAFYENDVRFLGSL.

E262 provides a ligand contact to Mg(2+).

This sequence belongs to the class-II aminoacyl-tRNA synthetase family. Phe-tRNA synthetase alpha subunit type 1 subfamily. In terms of assembly, tetramer of two alpha and two beta subunits. Mg(2+) serves as cofactor.

The protein localises to the cytoplasm. The enzyme catalyses tRNA(Phe) + L-phenylalanine + ATP = L-phenylalanyl-tRNA(Phe) + AMP + diphosphate + H(+). The chain is Phenylalanine--tRNA ligase alpha subunit from Sorangium cellulosum (strain So ce56) (Polyangium cellulosum (strain So ce56)).